The chain runs to 973 residues: NLR family member X1 (973 aa).

A mitochondrion-targeting transit peptide spans 1-84; it reads MRWGCHLPRT…EAIQRHRRNL (84 aa). Residues 73-554 are required for interaction with MAVS; the sequence is ATEAIQRHRR…RILPLLFNLL (482 aa). Positions 158 to 481 constitute an NACHT domain; sequence QTVVLYGTVG…LRFFLAPCVE (324 aa). Residue 164–171 coordinates ATP; it reads GTVGTGKS. Positions 554–972 are required for the repression of MAVS-induced interferon signaling; it reads LKVVPRVFGR…TLLEQLGGSG (419 aa). In terms of domain architecture, LRRNT spans 665-692; the sequence is RQVLPPSELLDHLFFHYEFQNQRFSAEV. 8 LRR repeats span residues 693-716, 722-745, 747-775, 776-799, 809-832, 833-855, 856-875, and 876-897; these read LGSL…VVAS, RHPL…TLMP, LLRA…LLHD, QCQI…VLMD, HLSL…LDRN, KQLQ…ALAK, AARK…ELSS, and EGRQ…VVAS. An LRRCT domain is found at 904–968; sequence VSEYWSVILS…SEVKTLLEQL (65 aa).

Belongs to the NLRP family. In terms of assembly, homohexamer. Interacts with MAVS. Interacts with TUFM.

The protein resides in the mitochondrion outer membrane. Participates in antiviral signaling. Acts as a negative regulator of MAVS-mediated antiviral responses, through the inhibition of the virus-induced RLH (RIG-like helicase)-MAVS interaction. Instead, promotes autophagy by interacting with TUFM and subsequently recruiting the autophagy-related proteins ATG5 and ATG12. Also regulates MAVS-dependent NLRP3 inflammasome activation to attenuate apoptosis. Has no inhibitory function on NF-kappa-B signaling pathway, but enhances NF-kappa-B and JUN N-terminal kinase dependent signaling through the production of reactive oxygen species. Regulates viral mediated-inflammation and energy metabolism in a sex-dependent manner. In females, prevents uncontrolled inflammation and energy metabolism and thus, may contribute to the sex differences observed in infectious and inflammatory diseases. The protein is NLR family member X1 (Nlrx1) of Rattus norvegicus (Rat).